The primary structure comprises 427 residues: Dihydroorotase (427 aa).

Zn(2+) contacts are provided by histidine 60 and histidine 62. Residues 62-64 and asparagine 94 contribute to the substrate site; that span reads HLR. Positions 151, 178, and 231 each coordinate Zn(2+). Residue asparagine 277 coordinates substrate. Aspartate 304 contacts Zn(2+). Residue aspartate 304 is part of the active site. Residues histidine 308 and 322–323 contribute to the substrate site; that span reads FG.

It belongs to the metallo-dependent hydrolases superfamily. DHOase family. Class I DHOase subfamily. Zn(2+) serves as cofactor.

The enzyme catalyses (S)-dihydroorotate + H2O = N-carbamoyl-L-aspartate + H(+). It participates in pyrimidine metabolism; UMP biosynthesis via de novo pathway; (S)-dihydroorotate from bicarbonate: step 3/3. Functionally, catalyzes the reversible cyclization of carbamoyl aspartate to dihydroorotate. The protein is Dihydroorotase of Pelotomaculum thermopropionicum (strain DSM 13744 / JCM 10971 / SI).